Consider the following 611-residue polypeptide: Dihydroxy-acid dehydratase (611 aa).

Asp-81 provides a ligand contact to Mg(2+). [2Fe-2S] cluster is bound at residue Cys-122. Positions 123 and 124 each coordinate Mg(2+). Lys-124 carries the N6-carboxylysine modification. Cys-195 provides a ligand contact to [2Fe-2S] cluster. Glu-491 is a binding site for Mg(2+). Residue Ser-517 is the Proton acceptor of the active site.

It belongs to the IlvD/Edd family. In terms of assembly, homodimer. [2Fe-2S] cluster serves as cofactor. Requires Mg(2+) as cofactor.

The catalysed reaction is (2R)-2,3-dihydroxy-3-methylbutanoate = 3-methyl-2-oxobutanoate + H2O. It catalyses the reaction (2R,3R)-2,3-dihydroxy-3-methylpentanoate = (S)-3-methyl-2-oxopentanoate + H2O. The protein operates within amino-acid biosynthesis; L-isoleucine biosynthesis; L-isoleucine from 2-oxobutanoate: step 3/4. It participates in amino-acid biosynthesis; L-valine biosynthesis; L-valine from pyruvate: step 3/4. Its function is as follows. Functions in the biosynthesis of branched-chain amino acids. Catalyzes the dehydration of (2R,3R)-2,3-dihydroxy-3-methylpentanoate (2,3-dihydroxy-3-methylvalerate) into 2-oxo-3-methylpentanoate (2-oxo-3-methylvalerate) and of (2R)-2,3-dihydroxy-3-methylbutanoate (2,3-dihydroxyisovalerate) into 2-oxo-3-methylbutanoate (2-oxoisovalerate), the penultimate precursor to L-isoleucine and L-valine, respectively. The chain is Dihydroxy-acid dehydratase from Actinobacillus pleuropneumoniae serotype 3 (strain JL03).